The following is a 771-amino-acid chain: Ribonucleoside-diphosphate reductase large subunit (771 aa).

One can recognise an ATP-cone domain in the interval 1 to 92; it reads MFVIKRNGYK…VSNLHKETKK (92 aa). ATP is bound by residues 5–6, 11–17, T53, D57, and K88; these read KR and ENVMFDK. GDP contacts are provided by S202 and S217. DTTP contacts are provided by residues 226–228, K243, and R256; that span reads DSI. N427 is a binding site for GDP. N427 (proton acceptor) is an active-site residue. C429 acts as the Cysteine radical intermediate in catalysis. GDP-binding positions include E431 and 603-606; that span reads TAST. The Proton acceptor role is filled by E431.

The protein belongs to the ribonucleoside diphosphate reductase large chain family. In terms of assembly, interacts with RNR2/OPG047 subunit. Mg(2+) serves as cofactor.

The enzyme catalyses a 2'-deoxyribonucleoside 5'-diphosphate + [thioredoxin]-disulfide + H2O = a ribonucleoside 5'-diphosphate + [thioredoxin]-dithiol. Ribonucleoside-diphosphate reductase holoenzyme provides the precursors necessary for viral DNA synthesis. Allows virus growth in non-dividing cells. Catalyzes the biosynthesis of deoxyribonucleotides from the corresponding ribonucleotides. This is Ribonucleoside-diphosphate reductase large subunit (OPG080) from Homo sapiens (Human).